Reading from the N-terminus, the 488-residue chain is Bifunctional protein GlmU (488 aa).

Residues 1–237 (MPRTRTPLAA…VEEASGVNDR (237 aa)) form a pyrophosphorylase region. UDP-N-acetyl-alpha-D-glucosamine contacts are provided by residues 13–16 (LAAG), Lys-27, Gln-82, 87–88 (GT), 110–112 (SGD), Gly-149, Glu-164, Asn-179, and Asn-235. Asp-112 provides a ligand contact to Mg(2+). Residue Asn-235 participates in Mg(2+) binding. The segment at 238–258 (VELSRANRVMVGRLAEAFMRA) is linker. An N-acetyltransferase region spans residues 259–488 (GVTIEDPARF…KGRPAARRAS (230 aa)). Residues Arg-341 and Lys-359 each coordinate UDP-N-acetyl-alpha-D-glucosamine. His-371 serves as the catalytic Proton acceptor. UDP-N-acetyl-alpha-D-glucosamine-binding residues include Tyr-374 and Asn-385. Residues Ala-388, 394-395 (NY), Ser-413, Ala-431, and Arg-448 contribute to the acetyl-CoA site. Residues 459 to 488 (AQRQAEKQMKGTATGPASARKGRPAARRAS) are disordered. Residues 478 to 488 (RKGRPAARRAS) are compositionally biased toward basic residues.

The protein in the N-terminal section; belongs to the N-acetylglucosamine-1-phosphate uridyltransferase family. In the C-terminal section; belongs to the transferase hexapeptide repeat family. In terms of assembly, homotrimer. It depends on Mg(2+) as a cofactor.

Its subcellular location is the cytoplasm. The catalysed reaction is alpha-D-glucosamine 1-phosphate + acetyl-CoA = N-acetyl-alpha-D-glucosamine 1-phosphate + CoA + H(+). It carries out the reaction N-acetyl-alpha-D-glucosamine 1-phosphate + UTP + H(+) = UDP-N-acetyl-alpha-D-glucosamine + diphosphate. Its pathway is nucleotide-sugar biosynthesis; UDP-N-acetyl-alpha-D-glucosamine biosynthesis; N-acetyl-alpha-D-glucosamine 1-phosphate from alpha-D-glucosamine 6-phosphate (route II): step 2/2. The protein operates within nucleotide-sugar biosynthesis; UDP-N-acetyl-alpha-D-glucosamine biosynthesis; UDP-N-acetyl-alpha-D-glucosamine from N-acetyl-alpha-D-glucosamine 1-phosphate: step 1/1. It participates in bacterial outer membrane biogenesis; LPS lipid A biosynthesis. In terms of biological role, catalyzes the last two sequential reactions in the de novo biosynthetic pathway for UDP-N-acetylglucosamine (UDP-GlcNAc). The C-terminal domain catalyzes the transfer of acetyl group from acetyl coenzyme A to glucosamine-1-phosphate (GlcN-1-P) to produce N-acetylglucosamine-1-phosphate (GlcNAc-1-P), which is converted into UDP-GlcNAc by the transfer of uridine 5-monophosphate (from uridine 5-triphosphate), a reaction catalyzed by the N-terminal domain. This is Bifunctional protein GlmU from Anaeromyxobacter sp. (strain K).